A 929-amino-acid polypeptide reads, in one-letter code: Bifunctional uridylyltransferase/uridylyl-removing enzyme (929 aa).

The uridylyltransferase stretch occupies residues 1–383 (MDSVTTEHKQ…RPTPAKRRVP (383 aa)). The tract at residues 384–739 (DSDDFIVDNN…VGFDEVRGVT (356 aa)) is uridylyl-removing. The HD domain occupies 499 to 622 (VDEHLIRCVG…VQSVEQMKLL (124 aa)). 2 ACT domains span residues 740-822 (ELTI…VVAR) and 850-927 (VIEV…AVQP).

Belongs to the GlnD family. It depends on Mg(2+) as a cofactor.

It carries out the reaction [protein-PII]-L-tyrosine + UTP = [protein-PII]-uridylyl-L-tyrosine + diphosphate. The catalysed reaction is [protein-PII]-uridylyl-L-tyrosine + H2O = [protein-PII]-L-tyrosine + UMP + H(+). Its activity is regulated as follows. Uridylyltransferase (UTase) activity is inhibited by glutamine, while glutamine activates uridylyl-removing (UR) activity. Modifies, by uridylylation and deuridylylation, the PII regulatory proteins (GlnB and homologs), in response to the nitrogen status of the cell that GlnD senses through the glutamine level. Under low glutamine levels, catalyzes the conversion of the PII proteins and UTP to PII-UMP and PPi, while under higher glutamine levels, GlnD hydrolyzes PII-UMP to PII and UMP (deuridylylation). Thus, controls uridylylation state and activity of the PII proteins, and plays an important role in the regulation of nitrogen fixation and metabolism. In Bradyrhizobium diazoefficiens (strain JCM 10833 / BCRC 13528 / IAM 13628 / NBRC 14792 / USDA 110), this protein is Bifunctional uridylyltransferase/uridylyl-removing enzyme.